The following is a 134-amino-acid chain: ATP synthase epsilon chain (134 aa).

The protein belongs to the ATPase epsilon chain family. F-type ATPases have 2 components, CF(1) - the catalytic core - and CF(0) - the membrane proton channel. CF(1) has five subunits: alpha(3), beta(3), gamma(1), delta(1), epsilon(1). CF(0) has three main subunits: a, b and c.

It localises to the cell membrane. Functionally, produces ATP from ADP in the presence of a proton gradient across the membrane. The chain is ATP synthase epsilon chain from Clostridium botulinum (strain Alaska E43 / Type E3).